A 164-amino-acid chain; its full sequence is Large ribosomal subunit protein uL23 (164 aa).

The disordered stretch occupies residues 1–41 (MPAKAASAAASKKNSAPKSAVSKKVAKKGAPAAAAKPTKVV).

This sequence belongs to the universal ribosomal protein uL23 family.

This protein binds to a specific region on the 26S rRNA. The chain is Large ribosomal subunit protein uL23 (RPL23A) from Trypanosoma brucei brucei.